Reading from the N-terminus, the 427-residue chain is 3-phosphoshikimate 1-carboxyvinyltransferase (427 aa).

3-phosphoshikimate-binding residues include Lys22, Ser23, and Arg27. Phosphoenolpyruvate is bound at residue Lys22. Phosphoenolpyruvate contacts are provided by Gly93 and Arg122. Positions 167, 169, 315, and 342 each coordinate 3-phosphoshikimate. Gln169 provides a ligand contact to phosphoenolpyruvate. Asp315 (proton acceptor) is an active-site residue. Residues Arg346 and Arg387 each coordinate phosphoenolpyruvate.

This sequence belongs to the EPSP synthase family. Monomer.

It localises to the cytoplasm. It carries out the reaction 3-phosphoshikimate + phosphoenolpyruvate = 5-O-(1-carboxyvinyl)-3-phosphoshikimate + phosphate. The protein operates within metabolic intermediate biosynthesis; chorismate biosynthesis; chorismate from D-erythrose 4-phosphate and phosphoenolpyruvate: step 6/7. Catalyzes the transfer of the enolpyruvyl moiety of phosphoenolpyruvate (PEP) to the 5-hydroxyl of shikimate-3-phosphate (S3P) to produce enolpyruvyl shikimate-3-phosphate and inorganic phosphate. This Thermus thermophilus (strain ATCC BAA-163 / DSM 7039 / HB27) protein is 3-phosphoshikimate 1-carboxyvinyltransferase.